Reading from the N-terminus, the 547-residue chain is Chaperonin GroEL 2 (547 aa).

ATP is bound by residues 30–33 (TLGP), Lys-51, 87–91 (DGTTT), Gly-415, 479–481 (NAA), and Asp-495. Positions 525 to 547 (PKEESAAPAGGGMGGMGGMGGMM) are disordered. A compositionally biased stretch (gly residues) spans 533–547 (AGGGMGGMGGMGGMM).

This sequence belongs to the chaperonin (HSP60) family. In terms of assembly, forms a cylinder of 14 subunits composed of two heptameric rings stacked back-to-back. Interacts with the co-chaperonin GroES.

It is found in the cytoplasm. It carries out the reaction ATP + H2O + a folded polypeptide = ADP + phosphate + an unfolded polypeptide.. Functionally, together with its co-chaperonin GroES, plays an essential role in assisting protein folding. The GroEL-GroES system forms a nano-cage that allows encapsulation of the non-native substrate proteins and provides a physical environment optimized to promote and accelerate protein folding. The polypeptide is Chaperonin GroEL 2 (Anaeromyxobacter dehalogenans (strain 2CP-C)).